The following is a 33-amino-acid chain: Dermaseptin-H9 (33 aa).

Leucine amide is present on Leu33.

The protein belongs to the frog skin active peptide (FSAP) family. Dermaseptin subfamily. In terms of tissue distribution, expressed by the skin glands.

It is found in the secreted. Its function is as follows. Has antimicrobial activity. In Pithecopus hypochondrialis (Orange-legged leaf frog), this protein is Dermaseptin-H9.